The following is a 119-amino-acid chain: Probable prefoldin subunit 6 (119 aa).

The protein belongs to the prefoldin subunit beta family. Heterohexamer of two PFD-alpha type and four PFD-beta type subunits. May interact with MSP1.

Its function is as follows. Binds specifically to cytosolic chaperonin (c-CPN) and transfers target proteins to it. Binds to nascent polypeptide chain and promotes folding in an environment in which there are many competing pathways for nonnative proteins. This Plasmodium falciparum (isolate 3D7) protein is Probable prefoldin subunit 6.